The following is a 392-amino-acid chain: Phosphoglycerate kinase (392 aa).

Substrate contacts are provided by residues 19–21 (DFN), Arg-35, 58–61 (HMGR), Arg-117, and Arg-150. ATP is bound by residues Lys-201, Glu-323, and 349-352 (GGDS).

It belongs to the phosphoglycerate kinase family. Monomer.

The protein localises to the cytoplasm. The catalysed reaction is (2R)-3-phosphoglycerate + ATP = (2R)-3-phospho-glyceroyl phosphate + ADP. It functions in the pathway carbohydrate degradation; glycolysis; pyruvate from D-glyceraldehyde 3-phosphate: step 2/5. This Desulfotalea psychrophila (strain LSv54 / DSM 12343) protein is Phosphoglycerate kinase.